Here is a 244-residue protein sequence, read N- to C-terminus: Proteasome subunit alpha type-5 (244 aa).

It belongs to the peptidase T1A family. The 26S proteasome consists of a 20S proteasome core and two 19S regulatory subunits. The 20S proteasome core is composed of 28 subunits that are arranged in four stacked rings, resulting in a barrel-shaped structure. The two end rings are each formed by seven alpha subunits, and the two central rings are each formed by seven beta subunits. The catalytic chamber with the active sites is on the inside of the barrel.

The protein resides in the cytoplasm. Its subcellular location is the nucleus. Functionally, the proteasome is a multicatalytic proteinase complex which is characterized by its ability to cleave peptides with Arg, Phe, Tyr, Leu, and Glu adjacent to the leaving group at neutral or slightly basic pH. The proteasome has an ATP-dependent proteolytic activity. The protein is Proteasome subunit alpha type-5 (Prosalpha5) of Drosophila melanogaster (Fruit fly).